A 231-amino-acid polypeptide reads, in one-letter code: Probable septum site-determining protein MinC (231 aa).

It belongs to the MinC family. As to quaternary structure, interacts with MinD and FtsZ.

Functionally, cell division inhibitor that blocks the formation of polar Z ring septums. Rapidly oscillates between the poles of the cell to destabilize FtsZ filaments that have formed before they mature into polar Z rings. Prevents FtsZ polymerization. In Bradyrhizobium diazoefficiens (strain JCM 10833 / BCRC 13528 / IAM 13628 / NBRC 14792 / USDA 110), this protein is Probable septum site-determining protein MinC.